A 247-amino-acid polypeptide reads, in one-letter code: Adenylate kinase (247 aa).

42–47 (GAGKGT) contributes to the ATP binding site. The NMP stretch occupies residues 62-91 (ATGDMLRAQVTAKTELGVQAKKIMDQGGLV). Residues threonine 63, arginine 68, 89-91 (GLV), 118-121 (GFPR), and glutamine 125 contribute to the AMP site. Residues 159–196 (GRLVHPASGRSYHKLFNPPKKEMTDDQTGEPLVQRSDD) form an LID region. ATP-binding positions include arginine 160 and 169–170 (SY). Residues 169-191 (SYHKLFNPPKKEMTDDQTGEPLV) form a disordered region. AMP-binding residues include arginine 193 and arginine 204. Glutamine 232 provides a ligand contact to ATP.

This sequence belongs to the adenylate kinase family. AK2 subfamily. Monomer.

Its subcellular location is the cytoplasm. The protein localises to the cytosol. It is found in the mitochondrion intermembrane space. The enzyme catalyses AMP + ATP = 2 ADP. Its function is as follows. Catalyzes the reversible transfer of the terminal phosphate group between ATP and AMP. Plays an important role in cellular energy homeostasis and in adenine nucleotide metabolism. Adenylate kinase activity is critical for regulation of the phosphate utilization and the AMP de novo biosynthesis pathways. The protein is Adenylate kinase of Meyerozyma guilliermondii (strain ATCC 6260 / CBS 566 / DSM 6381 / JCM 1539 / NBRC 10279 / NRRL Y-324) (Yeast).